Reading from the N-terminus, the 226-residue chain is Ribose-5-phosphate isomerase A (226 aa).

Residues 33–36, 86–89, and 99–102 contribute to the substrate site; these read TGST, DGAD, and KGGG. E108 (proton acceptor) is an active-site residue. K126 contributes to the substrate binding site.

The protein belongs to the ribose 5-phosphate isomerase family. In terms of assembly, homodimer.

The catalysed reaction is aldehydo-D-ribose 5-phosphate = D-ribulose 5-phosphate. It functions in the pathway carbohydrate degradation; pentose phosphate pathway; D-ribose 5-phosphate from D-ribulose 5-phosphate (non-oxidative stage): step 1/1. Functionally, catalyzes the reversible conversion of ribose-5-phosphate to ribulose 5-phosphate. The chain is Ribose-5-phosphate isomerase A from Bordetella bronchiseptica (strain ATCC BAA-588 / NCTC 13252 / RB50) (Alcaligenes bronchisepticus).